A 361-amino-acid chain; its full sequence is Phospho-N-acetylmuramoyl-pentapeptide-transferase (361 aa).

A run of 10 helical transmembrane segments spans residues 25-45, 73-93, 98-118, 139-159, 168-188, 200-220, 237-257, 264-284, 289-309, and 339-359; these read RGILAALTALFLSLWMGPAVI, TMGGSLILLTVTLSVLLWGDL, VWLVLAVMICFGAIGWYDDWI, IFGLAAGLFLYYTADVPAAIT, IALPLAGVSFVVIAYFWIVGF, GLAIMPTVLVACALGVFAYAS, AGELIIICSAIAGAGLGFLWF, VFMGDIGALSLGAVLGTVAVI, LVLVIMGGVFVIETLSVMIQV, and VIVRFWIISVVLVLIGLATLK.

Belongs to the glycosyltransferase 4 family. MraY subfamily. It depends on Mg(2+) as a cofactor.

It is found in the cell inner membrane. It catalyses the reaction UDP-N-acetyl-alpha-D-muramoyl-L-alanyl-gamma-D-glutamyl-meso-2,6-diaminopimeloyl-D-alanyl-D-alanine + di-trans,octa-cis-undecaprenyl phosphate = di-trans,octa-cis-undecaprenyl diphospho-N-acetyl-alpha-D-muramoyl-L-alanyl-D-glutamyl-meso-2,6-diaminopimeloyl-D-alanyl-D-alanine + UMP. The protein operates within cell wall biogenesis; peptidoglycan biosynthesis. Catalyzes the initial step of the lipid cycle reactions in the biosynthesis of the cell wall peptidoglycan: transfers peptidoglycan precursor phospho-MurNAc-pentapeptide from UDP-MurNAc-pentapeptide onto the lipid carrier undecaprenyl phosphate, yielding undecaprenyl-pyrophosphoryl-MurNAc-pentapeptide, known as lipid I. This chain is Phospho-N-acetylmuramoyl-pentapeptide-transferase, found in Xanthomonas campestris pv. campestris (strain 8004).